We begin with the raw amino-acid sequence, 211 residues long: High mobility group protein B1-like 1 (211 aa).

Residues K3, K7, K8, K12, K28, K29, and K30 each carry the N6-acetyllysine modification. Residues 9–79 constitute a DNA-binding region (HMG box 1); that stretch reads PRGKMSSYAF…HYERQMKTYI (71 aa). The segment at 71-96 is disordered; sequence YERQMKTYIPPKGETKKKFKDPNAPK. Residues 83-94 show a composition bias toward basic and acidic residues; it reads GETKKKFKDPNA. A DNA-binding region (HMG box 2) is located at residues 95–163; that stretch reads PKRPPSAFFL…KYEKDIAAYQ (69 aa). K127, K128, K172, K173, K177, K180, K182, K183, K184, and K185 each carry N6-acetyllysine. The disordered stretch occupies residues 161 to 211; it reads AYQAKGKPEAAKKGVVKAEKSKKKKEEEEDEEDEEDEEEEDEEDEEDDDDE. Residues 166 to 179 show a composition bias toward basic and acidic residues; it reads GKPEAAKKGVVKAE. Residues 187–211 are compositionally biased toward acidic residues; that stretch reads EEEDEEDEEDEEEEDEEDEEDDDDE.

It belongs to the HMGB family.

Its subcellular location is the nucleus. The protein resides in the chromosome. In terms of biological role, binds preferentially single-stranded DNA and unwinds double-stranded DNA. This is High mobility group protein B1-like 1 (HMGB1P1) from Homo sapiens (Human).